The chain runs to 357 residues: MACLKLQAVTKSYDGVTPVIKQIDLDVADGEFIVMVGPSGCGKSTLLRMVAGLERTTTGDIYIGDQRVTDLEPKDRGIAMVFQNYALYPHMNVFDNMAYGLKIRGFGKEQIRQRVDEAARILELQPLLKRKPRELSGGQRQRVAMGRAIVREPAVFLFDEPLSNLDAKLRVQMRLELQQLHRRLKTTSLYVTHDQVEAMTLAQRVIVMNKGVAEQIGTPSEVYKRPASLFVASFIGSPAMNLLDGTVSPDGRTFILSDGLTLPLEIPQPQWGGRRLTLGIRPEHIQQTTSAQGVPMNLLTLELLGADNLAHGLWGGQSIIARLSHEEMPVAGSTLHLYLPPAALHFFDTDSGLRIEP.

In terms of domain architecture, ABC transporter spans 4 to 235; the sequence is LKLQAVTKSY…PASLFVASFI (232 aa). ATP is bound at residue 37–44; it reads GPSGCGKS.

It belongs to the ABC transporter superfamily. sn-glycerol-3-phosphate importer (TC 3.A.1.1.3) family. The complex is composed of two ATP-binding proteins (UgpC), two transmembrane proteins (UgpA and UgpE) and a solute-binding protein (UgpB).

The protein localises to the cell inner membrane. It carries out the reaction sn-glycerol 3-phosphate(out) + ATP + H2O = sn-glycerol 3-phosphate(in) + ADP + phosphate + H(+). In terms of biological role, part of the ABC transporter complex UgpBAEC involved in sn-glycerol-3-phosphate (G3P) import. Responsible for energy coupling to the transport system. The polypeptide is sn-glycerol-3-phosphate import ATP-binding protein UgpC (Yersinia pseudotuberculosis serotype I (strain IP32953)).